We begin with the raw amino-acid sequence, 524 residues long: NAD(P)H-quinone oxidoreductase chain 4, chloroplastic (524 aa).

14 helical membrane passes run 4 to 24, 31 to 51, 87 to 107, 113 to 133, 134 to 154, 167 to 187, 211 to 231, 242 to 262, 275 to 295, 308 to 328, 330 to 350, 386 to 406, 417 to 437, and 465 to 485; these read YPWL…IPLI, LIRW…TYVF, IALV…AWPV, LFYF…LAQD, LLLF…LLSM, FILY…TISL, ILVY…FPFH, HYST…YGFI, IFAP…ALVS, SSVS…DLGL, GAIL…FLAG, LALP…GIVA, IITC…LSMV, and VFII…PDLT.

It belongs to the complex I subunit 4 family.

Its subcellular location is the plastid. The protein localises to the chloroplast thylakoid membrane. The enzyme catalyses a plastoquinone + NADH + (n+1) H(+)(in) = a plastoquinol + NAD(+) + n H(+)(out). It carries out the reaction a plastoquinone + NADPH + (n+1) H(+)(in) = a plastoquinol + NADP(+) + n H(+)(out). The protein is NAD(P)H-quinone oxidoreductase chain 4, chloroplastic of Staurastrum punctulatum (Green alga).